The following is a 483-amino-acid chain: Cytochrome P450 71A23 (483 aa).

A helical membrane pass occupies residues 1–21 (MILFLCLIILFIITILFFKKH). Residue C429 coordinates heme.

The protein belongs to the cytochrome P450 family. Requires heme as cofactor.

Its subcellular location is the membrane. In Arabidopsis thaliana (Mouse-ear cress), this protein is Cytochrome P450 71A23 (CYP71A23).